A 313-amino-acid chain; its full sequence is Methionyl-tRNA formyltransferase (313 aa).

112-115 (SLLP) lines the (6S)-5,6,7,8-tetrahydrofolate pocket.

This sequence belongs to the Fmt family.

The enzyme catalyses L-methionyl-tRNA(fMet) + (6R)-10-formyltetrahydrofolate = N-formyl-L-methionyl-tRNA(fMet) + (6S)-5,6,7,8-tetrahydrofolate + H(+). Attaches a formyl group to the free amino group of methionyl-tRNA(fMet). The formyl group appears to play a dual role in the initiator identity of N-formylmethionyl-tRNA by promoting its recognition by IF2 and preventing the misappropriation of this tRNA by the elongation apparatus. The polypeptide is Methionyl-tRNA formyltransferase (Roseiflexus castenholzii (strain DSM 13941 / HLO8)).